The following is a 637-amino-acid chain: MNTGIIDLFDNHVDSIPTILPHQLATLDYLVRTIIDENRSVLLFHIMGSGKTIIALLFALIASRFKKVHILVPNINILKIFNYNMGVAMNLFNDEFIAENIFIHSTTSFYSLNYNDNVINYNGLSRYNNSIFIVDKAHNIFGNNTGELMTVIKNKNKIPFLLLSGSPITNTPNTLGHIIDLMSEETIDFGEIISRGKKVIQTLLNERGVNVLKDLLKGRISYYEMPDKDLPTIRYHGRKFLDTRVVYCHMSKLQERDYMITRRQLCYHEMFDKNMYNVSMAVLGQLNLMNNLDTLFQEQDKELYPNLKINNGVLYGEELVTLNISSKFKYFINRIQTLNGKHFIYFSNSTYGGLVIKYIMLSNGYSEYNGSQGTNPHMINGKPKTFAIVTSKMKSSLEDLLDVYNSPENDDGSQLMFLFSSNIMSESYTLKEVRHIWFMTIPDTFSQYNQILGRSIRKFSYVDISEPVNVYLLAAVYSDFNDEVTSLNDYTQDELINVLPFDIKKLLYLKFKTKETNRIYSILQEMSETYSLPPHPSIVKVLLGELVRQFFYNNSRIKYNDAKLLKMVTSVIKNKEDARNYIDDIVNGHFFVSNKVFDKSLLYKYENDIITVPFRLSYEPFVWGVNFRKEYNVVSSP.

In terms of domain architecture, Helicase ATP-binding spans 32–185 (RTIIDENRSV…GHIIDLMSEE (154 aa)). 45 to 52 (HIMGSGKT) provides a ligand contact to ATP. The DEXH box motif lies at 135 to 138 (DKAH). In terms of domain architecture, Helicase C-terminal spans 327–507 (KFKYFINRIQ…VLPFDIKKLL (181 aa)).

Belongs to the helicase family. VETF subfamily. Heterodimer of a 70 kDa and a 82 kDa subunit. Part of the early transcription complex composed of ETF, RAP94/OPG109, and the DNA-directed RNA polymerase.

It is found in the virion. Acts with RNA polymerase to initiate transcription from early gene promoters. Is recruited by the RPO-associated protein of 94 kDa RAP94/OPG109 to form the early transcription complex, which also contains the core RNA polymerase. ETF heterodimer binds to early gene promoters. In Homo sapiens (Human), this protein is Early transcription factor 70 kDa subunit (OPG118).